Reading from the N-terminus, the 384-residue chain is MVRQLILISSLLAAVAVRAAPADPAHPMVTEAPDVNLVEKRATTCTFSGSEGASKASKSKTSCSTIYLSDVAVPSGTTLDLSDLNDGTHVIFQGETTFGYEEWEGPLVRVSGTDITVEGESDAVLNGDGSRWWDGEGGNGGKTKPKFFYAHDLTSSTIKSIYIENSPVQVFSIDGSTDLTMTDITVDNTDGDTDDLAANTDGFDIGESTYITITGAEIYNQDDCVAINSGENIYFSASVCSGGHGLSIGSVGGRDDNTVKNVTFYDVNVLKSQQAIRIKTIYGDTGSVSEVTYHEIAFSDATDYGIVIEQNYDDTSKTPTTGVPITDFVLENIVGTCEDDDCTEVYIACGDGSCSDWTWTGVSVTGGSVSDDCLNVPSGISCDL.

Positions 1-19 (MVRQLILISSLLAAVAVRA) are cleaved as a signal peptide. Residues 20–40 (APADPAHPMVTEAPDVNLVEK) constitute a propeptide that is removed on maturation. A disulfide bond links Cys45 and Cys63. PbH1 repeat units follow at residues 176-207 (STDLTMTDITVDNTDGDTDDLAANTDGFDIGE) and 208-229 (STYITITGAEIYNQDDCVAINS). Residue Asp222 is the Proton donor of the active site. A disulfide bridge links Cys224 with Cys240. His244 is an active-site residue. PbH1 repeat units lie at residues 254-280 (RDDNTVKNVTFYDVNVLKSQQAIRIKT) and 288-310 (VSEVTYHEIAFSDATDYGIVIEQ). Residue Asn261 is glycosylated (N-linked (GlcNAc...) asparagine). 2 disulfides stabilise this stretch: Cys349/Cys354 and Cys373/Cys382.

Belongs to the glycosyl hydrolase 28 family.

The protein localises to the secreted. The catalysed reaction is (1,4-alpha-D-galacturonosyl)n+m + H2O = (1,4-alpha-D-galacturonosyl)n + (1,4-alpha-D-galacturonosyl)m.. Functionally, involved in maceration and soft-rotting of plant tissue. Hydrolyzes the 1,4-alpha glycosidic bonds of de-esterified pectate in the smooth region of the plant cell wall. The sequence is that of Probable endopolygalacturonase C (pgaC) from Aspergillus niger (strain ATCC MYA-4892 / CBS 513.88 / FGSC A1513).